Here is a 156-residue protein sequence, read N- to C-terminus: Ribosomal RNA large subunit methyltransferase H (156 aa).

S-adenosyl-L-methionine is bound by residues L73, G104, and L123–L128.

The protein belongs to the RNA methyltransferase RlmH family. Homodimer.

The protein resides in the cytoplasm. The enzyme catalyses pseudouridine(1915) in 23S rRNA + S-adenosyl-L-methionine = N(3)-methylpseudouridine(1915) in 23S rRNA + S-adenosyl-L-homocysteine + H(+). Functionally, specifically methylates the pseudouridine at position 1915 (m3Psi1915) in 23S rRNA. This chain is Ribosomal RNA large subunit methyltransferase H, found in Pseudoalteromonas atlantica (strain T6c / ATCC BAA-1087).